We begin with the raw amino-acid sequence, 372 residues long: Uroporphyrinogen decarboxylase (372 aa).

Substrate is bound by residues 35 to 39, Asp85, Tyr166, Ser221, and His342; that span reads RQAGR.

The protein belongs to the uroporphyrinogen decarboxylase family. Homodimer.

It is found in the cytoplasm. The catalysed reaction is uroporphyrinogen III + 4 H(+) = coproporphyrinogen III + 4 CO2. Its pathway is porphyrin-containing compound metabolism; protoporphyrin-IX biosynthesis; coproporphyrinogen-III from 5-aminolevulinate: step 4/4. Catalyzes the decarboxylation of four acetate groups of uroporphyrinogen-III to yield coproporphyrinogen-III. The polypeptide is Uroporphyrinogen decarboxylase (Methylibium petroleiphilum (strain ATCC BAA-1232 / LMG 22953 / PM1)).